Consider the following 294-residue polypeptide: Very long chain fatty acid elongase 5 (294 aa).

Transmembrane regions (helical) follow at residues 26–46 (WLLL…LLIV), 64–84 (ILVV…YELV), 112–132 (VLWW…FFIL), 141–161 (FLHI…MNWV), 172–192 (FNSF…IPAI), 207–227 (LVQF…PCGF), and 231–251 (WLYF…NFYI). The disordered stretch occupies residues 261–294 (AKKDPRHNGIKSVNGHSNGASHTNAVKNRKARTD). Polar residues predominate over residues 274–286 (NGHSNGASHTNAV).

It belongs to the ELO family. ELOVL5 subfamily. In terms of tissue distribution, expression is highest in intestine, followed by brain and heart, and lowest in gill. Also expressed in liver, spleen and muscle.

Its subcellular location is the endoplasmic reticulum membrane. The protein resides in the cell projection. It localises to the dendrite. It catalyses the reaction a very-long-chain acyl-CoA + malonyl-CoA + H(+) = a very-long-chain 3-oxoacyl-CoA + CO2 + CoA. It carries out the reaction (6Z,9Z,12Z)-octadecatrienoyl-CoA + malonyl-CoA + H(+) = (8Z,11Z,14Z)-3-oxoeicosatrienoyl-CoA + CO2 + CoA. The catalysed reaction is (9Z,12Z,15Z)-octadecatrienoyl-CoA + malonyl-CoA + H(+) = (11Z,14Z,17Z)-3-oxoeicosatrienoyl-CoA + CO2 + CoA. The enzyme catalyses (9Z)-hexadecenoyl-CoA + malonyl-CoA + H(+) = 3-oxo-(11Z)-octadecenoyl-CoA + CO2 + CoA. It catalyses the reaction (9Z)-octadecenoyl-CoA + malonyl-CoA + H(+) = 3-oxo-(11Z)-eicosenoyl-CoA + CO2 + CoA. It carries out the reaction (11Z)-octadecenoyl-CoA + malonyl-CoA + H(+) = 3-oxo-(13Z)-eicosenoyl-CoA + CO2 + CoA. The catalysed reaction is (9Z,12Z)-octadecadienoyl-CoA + malonyl-CoA + H(+) = (11Z,14Z)-3-oxoicosa-11,14-dienoyl-CoA + CO2 + CoA. The enzyme catalyses (6Z,9Z,12Z,15Z)-octadecatetraenoyl-CoA + malonyl-CoA + H(+) = (8Z,11Z,14Z,17Z)-3-oxoicosatetraenoyl-CoA + CO2 + CoA. It catalyses the reaction (5Z,8Z,11Z,14Z)-eicosatetraenoyl-CoA + malonyl-CoA + H(+) = (7Z,10Z,13Z,16Z)-3-oxodocosatetraenoyl-CoA + CO2 + CoA. It carries out the reaction (5Z,8Z,11Z,14Z,17Z)-eicosapentaenoyl-CoA + malonyl-CoA + H(+) = 3-oxo-(7Z,10Z,13Z,16Z,19Z)-docosapentaenoyl-CoA + CO2 + CoA. It functions in the pathway lipid metabolism; polyunsaturated fatty acid biosynthesis. Its function is as follows. Catalyzes the first and rate-limiting reaction of the four reactions that constitute the long-chain fatty acids elongation cycle. This endoplasmic reticulum-bound enzymatic process allows the addition of 2 carbons to the chain of long- and very long-chain fatty acids (VLCFAs) per cycle. Condensing enzyme that acts specifically toward polyunsaturated acyl-CoA with the higher activity toward C18:3(n-6) acyl-CoA. May participate in the production of monounsaturated and of polyunsaturated VLCFAs of different chain lengths that are involved in multiple biological processes as precursors of membrane lipids and lipid mediators. In conditions where the essential linoleic and alpha linoleic fatty acids are lacking it is also involved in the synthesis of Mead acid from oleic acid. This chain is Very long chain fatty acid elongase 5, found in Tachysurus fulvidraco (Yellow catfish).